Consider the following 46-residue polypeptide: Esculentin-1 (46 aa).

Cysteines 40 and 46 form a disulfide.

In terms of tissue distribution, expressed by the skin glands.

It is found in the secreted. Its function is as follows. Antimicrobial peptide. Stimulates insulin release by BRIN-BD11 cells in vitro. This is Esculentin-1 from Pelophylax saharicus (Sahara frog).